The following is a 239-amino-acid chain: Lactate utilization protein A 1 (239 aa).

The protein belongs to the LutA/YkgE family.

In terms of biological role, is involved in L-lactate degradation and allows cells to grow with lactate as the sole carbon source. This Bacillus cereus (strain AH820) protein is Lactate utilization protein A 1.